The chain runs to 496 residues: GTPase Der (496 aa).

EngA-type G domains follow at residues 3–168 (PIIA…VPEK) and 210–383 (IKLA…DCST). GTP is bound by residues 9–16 (GRPNVGKS), 56–60 (DTGGI), 120–123 (NKID), 216–223 (GRPNVGKS), 263–267 (DTAGV), and 328–331 (NKWD). The KH-like domain maps to 384–468 (KRINTSLLTR…PIRIQFKESE (85 aa)).

The protein belongs to the TRAFAC class TrmE-Era-EngA-EngB-Septin-like GTPase superfamily. EngA (Der) GTPase family. In terms of assembly, associates with the 50S ribosomal subunit.

Functionally, GTPase that plays an essential role in the late steps of ribosome biogenesis. In Hamiltonella defensa subsp. Acyrthosiphon pisum (strain 5AT), this protein is GTPase Der.